The sequence spans 108 residues: DNA-binding protein HBbu (108 aa).

This sequence belongs to the bacterial histone-like protein family.

Its function is as follows. Histone-like DNA-binding protein which is capable of wrapping DNA to stabilize it, and thus to prevent its denaturation under extreme environmental conditions. This chain is DNA-binding protein HBbu (hbb), found in Borrelia turicatae.